The sequence spans 264 residues: uncharacterized protein (264 aa).

Residues 9-29 (LVISILSLIATLSISFNIYFI) traverse the membrane as a helical segment.

It is found in the membrane. This is an uncharacterized protein from Ureaplasma parvum serovar 3 (strain ATCC 700970).